A 328-amino-acid chain; its full sequence is GMP reductase (328 aa).

Residue Cys176 is the Thioimidate intermediate of the active site. An NADP(+)-binding site is contributed by Ile205–Ile228.

Belongs to the IMPDH/GMPR family. GuaC type 2 subfamily.

It carries out the reaction IMP + NH4(+) + NADP(+) = GMP + NADPH + 2 H(+). Functionally, catalyzes the irreversible NADPH-dependent deamination of GMP to IMP. It functions in the conversion of nucleobase, nucleoside and nucleotide derivatives of G to A nucleotides, and in maintaining the intracellular balance of A and G nucleotides. This Streptococcus pneumoniae (strain Taiwan19F-14) protein is GMP reductase.